The sequence spans 255 residues: Tabinhibitin 7 (255 aa).

Positions 1–23 (MTSILVSSFLLATLVLQYATIDA) are cleaved as a signal peptide. A Cell attachment site motif is present at residues 32-34 (RGD). The region spanning 67–211 (LSKINDVRDH…KARALLTCNF (145 aa)) is the SCP domain.

Belongs to the CRISP family. In terms of tissue distribution, expressed in salivary glands.

The protein resides in the secreted. In terms of biological role, inhibits platelet aggregation induced by all agonists tested (ADP, arachidonic acid, the thromboxane A2 analog U46619, thrombin, and snake venom snaclecs (TMVA that activates platelet through GPIB, and stejnulxin that specifically acts through GPVI (GP6))). May act by competing with fibrinogen for binding to glycoprotein IIb/IIIa (ITGA2B/ITGB3). The protein is Tabinhibitin 7 of Tabanus yao (Horsefly).